The chain runs to 2039 residues: MDIVDTFNHLIPTEHLDDALFLGSNLENEVCEDFSASQNVLEDSLKNMLSDKDPMLGSASNQFCLPVLDSNDPNFQMPCSTVVGLDDIMDEGVVKESGNDTIDEEELILPNRNLRDKVEENSVRSPRKSPRLMAQEQVRSLRQSTIAKRSNAAPLSNTKKASGKTVSTAKAGVKQPERSQVKEEVCMSLKPEYHKENRRCSRNSGQIEVVPEVSVSSSHSSVSSCLEMKDEDGLDSKHKCNNPGEIDVPSHELNCSLLSETCVTIGEKKNEALMECKAKPVGSPLFKFSDKEEHEQNDSISGKTGETVVEEMIATRKVEQDSKETVKLSHEDDHILEDAGSSDISSDAACTNPNKTENSLVGLPSCVDEVTECNLELKDTMGIADKTENTLERNKIEPLGYCEDAESNRQLESTEFNKSNLEVVDTSTFGPESNILENAICDVPDQNSKQLNAIESTKIESHETANLQDDRNSQSSSVSYLESKSVKSKHTKPVIHSKQNMTTDAPKKIVAAKYEVIHSKTKVNVKSVKRNTDVPESQQNFHRPVKVRKKQIDKEPKIQSCNSGVKSVKNQAHSVLKKTLQDQTLVQIFKPLTHSLSDKSHAHPGCLKEPHHPAQTGHVSHSSQKQCHKPQQQAPAMKTNSHVKEELEHPGVEHFKEEDKLKLKKPEKNLQPRQRRSSKSFSLDEPPLFIPDNIATIRREGSDHSSSFESKYMWTPSKQCGFCKKPHGNRFMVGCGRCDDWFHGDCVGLSLSQAQQMGEEDKEYVCVKCCAEEDKKTEILDPDTLENQATVEFHSGDKTMECEKLGLSKHTTNDRTKYIDDTVKHKVKILKRESGEGRNSSDCRDNEIKKWQLAPLRKMGQPVLPRRSSEEKSEKIPKESTTVTCTGEKASKPGTHEKQEMKKKKVEKGVLNVHPAASASKPSADQIRQSVRHSLKDILMKRLTDSNLKVPEEKAAKVATKIEKELFSFFRDTDAKYKNKYRSLMFNLKDPKNNILFKKVLKGEVTPDHLIRMSPEELASKELAAWRRRENRHTIEMIEKEQREVERRPITKITHKGEIEIESDAPMKEQEAAMEIQEPAANKSLEKPEGSEKQKEEVDSMSKDTTSQHRQHLFDLNCKICIGRMAPPVDDLSPKKVKVVVGVARKHSDNEAESIADALSSTSNILASEFFEEEKQESPKSTFSPAPRPEMPGTVEVESTFLARLNFIWKGFINMPSVAKFVTKAYPVSGSPEYLTEDLPDSIQVGGRISPQTVWDYVEKIKASGTKEICVVRFTPVTEEDQISYTLLFAYFSSRKRYGVAANNMKQVKDMYLIPLGATDKIPHPLVPFDGPGLELHRPNLLLGLIIRQKLKRQHSACASTSHIAETPESAPPIALPPDKKSKIEVSTEEAPEEENDFFNSFTTVLHKQRNKPQQNLQEDLPTAVEPLMEVTKQEPPKPLRFLPGVLIGWENQPTTLELANKPLPVDDILQSLLGTTGQVYDQAQSVMEQNTVKEIPFLNEQTNSKIEKTDNVEVTDGENKEIKVKVDNISESTDKSAEIETSVVGSSSISAGSLTSLSLRGKPPDVSTEAFLTNLSIQSKQEETVESKEKTLKRQLQEDQENNLQDNQTSNSSPCRSNVGKGNIDGNVSCSENLVANTARSPQFINLKRDPRQAAGRSQPVTTSESKDGDSCRNGEKHMLPGLSHNKEHLTEQINVEEKLCSAEKNSCVQQSDNLKVAQNSPSVENIQTSQAEQAKPLQEDILMQNIETVHPFRRGSAVATSHFEVGNTCPSEFPSKSITFTSRSTSPRTSTNFSPMRPQQPNLQHLKSSPPGFPFPGPPNFPPQSMFGFPPHLPPPLLPPPGFGFAQNPMVPWPPVVHLPGQPQRMMGPLSQASRYIGPQNFYQVKDIRRPERRHSDPWGRQDQQQLDRPFNRGKGDRQRFYSDSHHLKRERHEKEWEQESERHRRRDRSQDKDRDRKSREEGHKDKERARLSHGDRGTDGKASRDSRNVDKKPDKPKSEDYEKDKEREKSKHREGEKDRDRYHKDRDHTDRTKSKR.

Phosphoserine occurs at positions 97 and 125. The segment covering 144–168 (STIAKRSNAAPLSNTKKASGKTVST) has biased composition (polar residues). Positions 144 to 178 (STIAKRSNAAPLSNTKKASGKTVSTAKAGVKQPER) are disordered. Residues Ser283 and Ser299 each carry the phosphoserine modification. Basic and acidic residues predominate over residues 460-472 (ESHETANLQDDRN). Disordered stretches follow at residues 460 to 492 (ESHE…KHTK), 528 to 555 (VKRN…IDKE), and 596 to 685 (LSDK…SLDE). A compositionally biased stretch (low complexity) spans 473–483 (SQSSSVSYLES). Over residues 596–612 (LSDKSHAHPGCLKEPHH) the composition is skewed to basic and acidic residues. Over residues 617 to 640 (GHVSHSSQKQCHKPQQQAPAMKTN) the composition is skewed to polar residues. Residues 642–670 (HVKEELEHPGVEHFKEEDKLKLKKPEKNL) show a composition bias toward basic and acidic residues. Residue Lys644 forms a Glycyl lysine isopeptide (Lys-Gly) (interchain with G-Cter in SUMO2) linkage. Ser680 bears the Phosphoserine mark. Residues 717–772 (SKQCGFCKKPHGNRFMVGCGRCDDWFHGDCVGLSLSQAQQMGEEDKEYVCVKCCAE) form a PHD-type zinc finger. Residues 860-904 (GQPVLPRRSSEEKSEKIPKESTTVTCTGEKASKPGTHEKQEMKKK) are disordered. Composition is skewed to basic and acidic residues over residues 867-878 (RSSEEKSEKIPK) and 889-900 (KASKPGTHEKQE). In terms of domain architecture, TFIIS central spans 927–1046 (IRQSVRHSLK…MIEKEQREVE (120 aa)). A Glycyl lysine isopeptide (Lys-Gly) (interchain with G-Cter in SUMO2) cross-link involves residue Lys964. Residue Ser1014 is modified to Phosphoserine. Residues 1078–1109 (EPAANKSLEKPEGSEKQKEEVDSMSKDTTSQH) form a disordered region. A compositionally biased stretch (basic and acidic residues) spans 1084-1102 (SLEKPEGSEKQKEEVDSMS). Ser1133, Ser1148, and Ser1178 each carry phosphoserine. 3 disordered regions span residues 1171-1191 (FEEE…RPEM), 1360-1380 (STSH…PPDK), and 1581-1623 (KQEE…VGKG). A compositionally biased stretch (basic and acidic residues) spans 1581–1598 (KQEETVESKEKTLKRQLQ). Ser1614 and Ser1642 each carry phosphoserine. Disordered regions lie at residues 1643-1684 (PQFI…LPGL) and 1776-1800 (PSKS…PMRP). Residues 1666-1684 (ESKDGDSCRNGEKHMLPGL) are compositionally biased toward basic and acidic residues. A compositionally biased stretch (low complexity) spans 1781 to 1797 (TFTSRSTSPRTSTNFSP). An asymmetric dimethylarginine mark is found at Arg1867 and Arg1877. Positions 1884 to 2039 (FYQVKDIRRP…DHTDRTKSKR (156 aa)) are disordered. Composition is skewed to basic and acidic residues over residues 1888 to 1902 (KDIR…DPWG) and 1912 to 2039 (PFNR…KSKR). Residues Ser1898 and Ser1925 each carry the phosphoserine modification. Residue Lys1931 forms a Glycyl lysine isopeptide (Lys-Gly) (interchain with G-Cter in SUMO2) linkage.

Ubiquitous. Expression is significantly reduced or lost in glioblastomas, glioblastoma cell lines, anaplastic astrocytomas, and astrocytomas.

The sequence is that of PHD finger protein 3 (PHF3) from Homo sapiens (Human).